The primary structure comprises 198 residues: Dermorphin-2 (198 aa).

The signal sequence occupies residues 1–20; that stretch reads MSFLKKSLLLILFLGLVSLS. Positions 21-45 are excised as a propeptide; it reads VCKEEKRVSEEENENEENHEEGSEM. Positions 24 to 198 are disordered; sequence EEKRVSEEEN…AFGYPSGEAK (175 aa). D-alanine (Ala) is present on Ala49. Ser54 is subject to Serine amide. The segment covering 56–65 has biased composition (basic and acidic residues); sequence EAKKIKRESE. A propeptide spanning residues 56-80 is cleaved from the precursor; the sequence is EAKKIKRESEEEKEIEENHEEGSEM. Ala84 bears the D-alanine (Ala) mark. Serine amide is present on Ser89. Residues 91–115 constitute a propeptide that is removed on maturation; the sequence is EAKKIKRESEEENENEENHEEGSEM. Residues 100-109 show a composition bias toward acidic residues; it reads EEENENEENH. D-alanine (Ala) is present on Ala119. Serine amide is present on Ser124. Basic and acidic residues predominate over residues 126 to 135; that stretch reads EAKKIKRESE. Positions 126-150 are excised as a propeptide; sequence EAKKIKRESEEEKEIEENHEEGSEM. Ala154 is modified (D-alanine (Ala)). At Ser159 the chain carries Serine amide. Residues 161-185 constitute a propeptide that is removed on maturation; sequence EAKKIKRESEEENENEENHEEGSEM. Residues 170–179 are compositionally biased toward acidic residues; the sequence is EEENENEENH. Position 189 is a D-alanine (Ala) (Ala189). Position 194 is a serine amide (Ser194). Positions 196-198 are excised as a propeptide; it reads EAK.

The protein belongs to the frog skin active peptide (FSAP) family. Dermorphin subfamily. In terms of tissue distribution, expressed by the skin glands.

The protein resides in the secreted. In terms of biological role, dermorphin has a very potent opiate-like activity. It has high affinity and selectivity for mu-type opioid receptors. The polypeptide is Dermorphin-2 (Phyllomedusa sauvagei (Sauvage's leaf frog)).